The following is a 176-amino-acid chain: MLVPPINLHAWVEQHRHLLKPPVGNKCIQQDGFIIMIVGGPNARTDYHYDEGPEWFFQLEGEMVLKVQDDGTARDIPIRAGEIFLLPPKVPHSPQRAAGSIGLVIERERLPHEQDGLQWYCPQCNHKLYEAMFPLENIETDFPPVFDHFYRSLALRTCMQCGHVHPAPERYAAIEA.

Residue R44 participates in O2 binding. Fe cation-binding residues include H48, E54, and H92. Substrate is bound at residue E54. R96 and E106 together coordinate substrate. Fe cation contacts are provided by C121, C124, C158, and C161.

This sequence belongs to the 3-HAO family. As to quaternary structure, homodimer. Requires Fe(2+) as cofactor.

The enzyme catalyses 3-hydroxyanthranilate + O2 = (2Z,4Z)-2-amino-3-carboxymuconate 6-semialdehyde. It participates in cofactor biosynthesis; NAD(+) biosynthesis; quinolinate from L-kynurenine: step 3/3. Catalyzes the oxidative ring opening of 3-hydroxyanthranilate to 2-amino-3-carboxymuconate semialdehyde, which spontaneously cyclizes to quinolinate. In Xanthomonas campestris pv. campestris (strain B100), this protein is 3-hydroxyanthranilate 3,4-dioxygenase.